A 371-amino-acid chain; its full sequence is Anhydro-N-acetylmuramic acid kinase (371 aa).

An ATP-binding site is contributed by 10–17 (GTSLDGID).

Belongs to the anhydro-N-acetylmuramic acid kinase family.

It carries out the reaction 1,6-anhydro-N-acetyl-beta-muramate + ATP + H2O = N-acetyl-D-muramate 6-phosphate + ADP + H(+). It functions in the pathway amino-sugar metabolism; 1,6-anhydro-N-acetylmuramate degradation. Its pathway is cell wall biogenesis; peptidoglycan recycling. Its function is as follows. Catalyzes the specific phosphorylation of 1,6-anhydro-N-acetylmuramic acid (anhMurNAc) with the simultaneous cleavage of the 1,6-anhydro ring, generating MurNAc-6-P. Is required for the utilization of anhMurNAc either imported from the medium or derived from its own cell wall murein, and thus plays a role in cell wall recycling. The sequence is that of Anhydro-N-acetylmuramic acid kinase from Chromohalobacter salexigens (strain ATCC BAA-138 / DSM 3043 / CIP 106854 / NCIMB 13768 / 1H11).